The following is a 338-amino-acid chain: Ketol-acid reductoisomerase (NADP(+)) (338 aa).

Residues 1 to 181 (MKVYYDKDAD…GGTKGGVIET (181 aa)) form the KARI N-terminal Rossmann domain. Residues 24 to 27 (YGSQ), Arg47, Ser52, and 82 to 85 (DETQ) each bind NADP(+). The active site involves His107. Gly133 provides a ligand contact to NADP(+). The KARI C-terminal knotted domain occupies 182 to 327 (SFREETETDL…AELRAMMPWI (146 aa)). The Mg(2+) site is built by Asp190, Glu194, Glu226, and Glu230. Substrate is bound at residue Ser251.

It belongs to the ketol-acid reductoisomerase family. Mg(2+) is required as a cofactor.

The enzyme catalyses (2R)-2,3-dihydroxy-3-methylbutanoate + NADP(+) = (2S)-2-acetolactate + NADPH + H(+). It catalyses the reaction (2R,3R)-2,3-dihydroxy-3-methylpentanoate + NADP(+) = (S)-2-ethyl-2-hydroxy-3-oxobutanoate + NADPH + H(+). It participates in amino-acid biosynthesis; L-isoleucine biosynthesis; L-isoleucine from 2-oxobutanoate: step 2/4. The protein operates within amino-acid biosynthesis; L-valine biosynthesis; L-valine from pyruvate: step 2/4. Its function is as follows. Involved in the biosynthesis of branched-chain amino acids (BCAA). Catalyzes an alkyl-migration followed by a ketol-acid reduction of (S)-2-acetolactate (S2AL) to yield (R)-2,3-dihydroxy-isovalerate. In the isomerase reaction, S2AL is rearranged via a Mg-dependent methyl migration to produce 3-hydroxy-3-methyl-2-ketobutyrate (HMKB). In the reductase reaction, this 2-ketoacid undergoes a metal-dependent reduction by NADPH to yield (R)-2,3-dihydroxy-isovalerate. The protein is Ketol-acid reductoisomerase (NADP(+)) of Laribacter hongkongensis (strain HLHK9).